Reading from the N-terminus, the 325-residue chain is MKTPELMAIWQRLKTACLVAIATFGLFFASDVLFPQAAAAYPFWAQQTAPETPREATGRIVCANCHLAAKEAEVEIPQSVLPDQVFEAVVKIPYDHSQQQVLGDGSKGGLNVGAVLMLPDGFKIAPADRLSDELKEKTEGLYFQSYAPDQENVVIIGPISGDQYEEIVFPVLSPDPKTDKNINYGKYAVHLGANRGRGQVYPTGELSNNNQFKASATGTITNIAVNEAAGTDITISTEAGEVIDTIPAGPEVIVSEGQAIAAGEALTNNPNVGGFGQKDTEVVLQNPARIYGYMAFVAGIMLTQIFLVLKKKQVERVQAAGQLDF.

A signal peptide spans 1–40 (MKTPELMAIWQRLKTACLVAIATFGLFFASDVLFPQAAAA). 4 residues coordinate heme: Y41, C62, C65, and H66. Residues 290–309 (IYGYMAFVAGIMLTQIFLVL) traverse the membrane as a helical segment.

It belongs to the cytochrome f family. In terms of assembly, the 4 large subunits of the cytochrome b6-f complex are cytochrome b6, subunit IV (17 kDa polypeptide, PetD), cytochrome f and the Rieske protein, while the 4 small subunits are PetG, PetL, PetM and PetN. The complex functions as a dimer. Heme is required as a cofactor.

The protein localises to the cellular thylakoid membrane. Component of the cytochrome b6-f complex, which mediates electron transfer between photosystem II (PSII) and photosystem I (PSI), cyclic electron flow around PSI, and state transitions. The polypeptide is Cytochrome f (petA) (Picosynechococcus sp. (strain ATCC 27264 / PCC 7002 / PR-6) (Agmenellum quadruplicatum)).